A 444-amino-acid polypeptide reads, in one-letter code: Retinoic acid receptor alpha-A (444 aa).

A modulating region spans residues 1 to 71 (MYESVDVNPF…PPSPPPPPRI (71 aa)). Polar residues predominate over residues 35–46 (SIRHQHWSGSNH). Positions 35 to 67 (SIRHQHWSGSNHSIETQSTSSEEIVPSPPSPPP) are disordered. Residues 47–58 (SIETQSTSSEEI) are compositionally biased toward low complexity. Residues 72–147 (YKPCFVCQDK…VGMSKESVRN (76 aa)) constitute a DNA-binding region (nuclear receptor). 2 NR C4-type zinc fingers span residues 75-95 (CFVCQDKSSGYHYGVSACEGC) and 111-130 (CHREKNCIINKVTRNRCQYC). The hinge stretch occupies residues 148 to 169 (DRNKKKKEEKKPECTENYTLSP). Positions 170-404 (DTEQMIDRVR…PLIQEMLENS (235 aa)) constitute an NR LBD domain. Residues 395 to 403 (PLIQEMLEN) carry the 9aaTAD motif. The interval 402–444 (ENSEGLESSSGAQGSRASATTPGSCSPSLSPNSAQSSPPTQSP) is disordered.

It belongs to the nuclear hormone receptor family. NR1 subfamily. Heterodimer; with an rxr molecule. Binds DNA preferentially as a rar/rxr heterodimer. As to expression, in the embryo, zygotic expression largely overlaps that of rarab, with high levels in hindbrain, lateral mesoderm and tail bud. In the adult, strong expression in brain and muscle, weaker expression in ovary, liver and digestive tract.

The protein resides in the nucleus. In terms of biological role, receptor for retinoic acid. Retinoic acid receptors bind as heterodimers to their target response elements in response to their ligands, all-trans or 9-cis retinoic acid, and regulate gene expression in various biological processes. The rar/rxr heterodimers bind to the retinoic acid response elements (RARE) composed of tandem 5'-AGGTCA-3' sites known as DR1-DR5. Required for hindbrain patterning. This Danio rerio (Zebrafish) protein is Retinoic acid receptor alpha-A.